The sequence spans 1096 residues: Pullulanase (1096 aa).

The first 19 residues, 1–19, serve as a signal peptide directing secretion; it reads MLRYTCHALFLGSLVLLSG. Cysteine 20 carries N-palmitoyl cysteine lipidation. Cysteine 20 is lipidated: S-diacylglycerol cysteine. The span at 24–34 shows a compositional bias: low complexity; that stretch reads SSSSTSGSPGS. The segment at 24-50 is disordered; it reads SSSSTSGSPGSPGNPGNPGTPGTPDPQ. Residue aspartate 694 is the Nucleophile of the active site. Catalysis depends on glutamate 723, which acts as the Proton donor. Residues 1014–1044 are disordered; it reads QAGRQSGQPCRRHRGGDQRRAGKPDAAGLRR.

It belongs to the glycosyl hydrolase 13 family. Homotrimer.

It localises to the cell membrane. It carries out the reaction Hydrolysis of (1-&gt;6)-alpha-D-glucosidic linkages in pullulan, amylopectin and glycogen, and in the alpha- and beta-limit dextrins of amylopectin and glycogen.. The chain is Pullulanase (pulA) from Klebsiella aerogenes (Enterobacter aerogenes).